Consider the following 33-residue polypeptide: GLLNTFKDWAISIAKGAGKGVLTTLSCKLDKSC.

Cys-27 and Cys-33 are joined by a disulfide.

This sequence belongs to the frog skin active peptide (FSAP) family. Brevinin subfamily. As to expression, expressed by the skin glands.

It is found in the secreted. In terms of biological role, has antibacterial activity against Gram-positive bacteria. The protein is Rugosin-A of Glandirana rugosa (Japanese wrinkled frog).